The chain runs to 121 residues: Replication protein A 14 kDa subunit (121 aa).

Glycyl lysine isopeptide (Lys-Gly) (interchain with G-Cter in ubiquitin) cross-links involve residues Lys-39 and Lys-88.

Belongs to the replication factor A protein 3 family. As to quaternary structure, component of the canonical replication protein A complex (RPA), a heterotrimer composed of RPA1, RPA2 and RPA3. Also a component of the aRPA, the alternative replication protein A complex, a trimeric complex similar to the replication protein A complex/RPA but where RPA1 and RPA3 are associated with RPA4 instead of RPA2. Post-translationally, ubiquitinated by RFWD3 at stalled replication forks in response to DNA damage: ubiquitination by RFWD3 does not lead to degradation by the proteasome and promotes removal of the RPA complex from stalled replication forks, promoting homologous recombination.

The protein resides in the nucleus. In terms of biological role, as part of the heterotrimeric replication protein A complex (RPA/RP-A), binds and stabilizes single-stranded DNA intermediates, that form during DNA replication or upon DNA stress. It prevents their reannealing and in parallel, recruits and activates different proteins and complexes involved in DNA metabolism. Thereby, it plays an essential role both in DNA replication and the cellular response to DNA damage. In the cellular response to DNA damage, the RPA complex controls DNA repair and DNA damage checkpoint activation. Through recruitment of ATRIP activates the ATR kinase a master regulator of the DNA damage response. It is required for the recruitment of the DNA double-strand break repair factors RAD51 and RAD52 to chromatin, in response to DNA damage. Also recruits to sites of DNA damage proteins like XPA and XPG that are involved in nucleotide excision repair and is required for this mechanism of DNA repair. Also plays a role in base excision repair (BER), probably through interaction with UNG. Also recruits SMARCAL1/HARP, which is involved in replication fork restart, to sites of DNA damage. May also play a role in telomere maintenance. RPA3 has its own single-stranded DNA-binding activity and may be responsible for polarity of the binding of the complex to DNA. The chain is Replication protein A 14 kDa subunit (Rpa3) from Mus musculus (Mouse).